Reading from the N-terminus, the 325-residue chain is tRNA N6-adenosine threonylcarbamoyltransferase (325 aa).

Residues His107, His111, and Tyr127 each contribute to the Fe cation site. Substrate is bound by residues Tyr127 to Gly131, Asp159, Gly172, Glu176, and Asn257. Residue Asp285 participates in Fe cation binding.

It belongs to the KAE1 / TsaD family. As to quaternary structure, monomer. Component of the KEOPS complex that consists of Kae1, Bud32, Cgi121 and Pcc1; the whole complex dimerizes. Fe(2+) is required as a cofactor.

Its subcellular location is the cytoplasm. It catalyses the reaction L-threonylcarbamoyladenylate + adenosine(37) in tRNA = N(6)-L-threonylcarbamoyladenosine(37) in tRNA + AMP + H(+). Required for the formation of a threonylcarbamoyl group on adenosine at position 37 (t(6)A37) in tRNAs that read codons beginning with adenine. Is a component of the KEOPS complex that is probably involved in the transfer of the threonylcarbamoyl moiety of threonylcarbamoyl-AMP (TC-AMP) to the N6 group of A37. Kae1 likely plays a direct catalytic role in this reaction, but requires other protein(s) of the complex to fulfill this activity. In Thermococcus gammatolerans (strain DSM 15229 / JCM 11827 / EJ3), this protein is tRNA N6-adenosine threonylcarbamoyltransferase.